A 365-amino-acid chain; its full sequence is Histidinol-phosphate aminotransferase 2 (365 aa).

Lys-222 is subject to N6-(pyridoxal phosphate)lysine.

Belongs to the class-II pyridoxal-phosphate-dependent aminotransferase family. Histidinol-phosphate aminotransferase subfamily. Homodimer. Pyridoxal 5'-phosphate is required as a cofactor.

It carries out the reaction L-histidinol phosphate + 2-oxoglutarate = 3-(imidazol-4-yl)-2-oxopropyl phosphate + L-glutamate. It functions in the pathway amino-acid biosynthesis; L-histidine biosynthesis; L-histidine from 5-phospho-alpha-D-ribose 1-diphosphate: step 7/9. The protein is Histidinol-phosphate aminotransferase 2 (hisC2) of Bordetella parapertussis (strain 12822 / ATCC BAA-587 / NCTC 13253).